The primary structure comprises 318 residues: DNA repair nuclease/redox regulator APEX1 (318 aa).

Residues 1–33 (MPKRGKKGAVAEDGDELRTEPEAKKSKTAAKKN) form a necessary for interaction with YBX1, binding to RNA, association together with NPM1 to rRNA, endoribonuclease activity on abasic RNA and localization in the nucleoli region. A disordered region spans residues 1-60 (MPKRGKKGAVAEDGDELRTEPEAKKSKTAAKKNDKEAAGEGPALYEDPPDQKTSPSGKPA). Residues Lys6 and Lys7 each carry the N6-acetyllysine; by EP300 modification. Positions 8–13 (GAVAED) match the Nuclear localization signal (NLS) motif. Residues 16–38 (ELRTEPEAKKSKTAAKKNDKEAA) are compositionally biased toward basic and acidic residues. Residues 23-33 (AKKSKTAAKKN) are necessary for interaction with NPM1 and for efficient rRNA binding. An N6-acetyllysine mark is found at Lys27, Lys31, Lys32, and Lys35. Ser54 is modified (phosphoserine). The Nuclear export signal (NES) motif lies at 64 to 80 (ICSWNVDGLRAWIKKKG). Cys65 bears the S-nitrosocysteine; alternate mark. Residues Cys65 and Cys93 are joined by a disulfide bond. Asp70 contributes to the Mg(2+) binding site. Cys93 bears the S-nitrosocysteine; alternate mark. Glu96 lines the Mg(2+) pocket. Residue Tyr171 is part of the active site. Lys197 carries the N6-acetyllysine modification. The Mg(2+) site is built by Asp210 and Asn212. Asp210 serves as the catalytic Proton donor/acceptor. Thr233 is subject to Phosphothreonine; by CDK5. A mitochondrial targeting sequence (MTS) region spans residues 289 to 318 (HSLLPALCDSKIRSKALGSDHCPITLYLAL). A Mg(2+)-binding site is contributed by Asp308. The residue at position 310 (Cys310) is an S-nitrosocysteine.

This sequence belongs to the DNA repair enzymes AP/ExoA family. Monomer. Homodimer; disulfide-linked. Component of the SET complex, composed of at least APEX1, SET, ANP32A, HMGB2, NME1 and TREX1. Associates with the dimer XRCC5/XRCC6 in a DNA-dependent manner. Interacts with SIRT1; the interaction is increased in the context of genotoxic stress. Interacts with HDAC1, HDAC2 and HDAC3; the interactions are not dependent on the APEX1 acetylation status. Interacts with XRCC1; the interaction is induced by SIRT1 and increased with the APEX1 acetylated form. Interacts with NPM1 (via N-terminal domain); the interaction is RNA-dependent and decreases in hydrogen peroxide-damaged cells. Interacts (via N-terminus) with YBX1 (via C-terminus); the interaction is increased in presence of APEX1 acetylated at Lys-6 and Lys-7. Interacts with HNRNPL; the interaction is DNA-dependent. Interacts (via N-terminus) with KPNA1 and KPNA2. Interacts with TXN; the interaction stimulates the FOS/JUN AP-1 complex DNA-binding activity in a redox-dependent manner. Interacts with GZMA, KRT8, MDM2, POLB, PRDX6, PRPF19, RPLP0, TOMM20 and WDR77. Binds to CDK5. Requires Mg(2+) as cofactor. It depends on Mn(2+) as a cofactor. In terms of processing, phosphorylated. Phosphorylation by kinase PKC or casein kinase CK2 results in enhanced redox activity that stimulates binding of the FOS/JUN AP-1 complex to its cognate binding site. AP-endodeoxyribonuclease activity is not affected by CK2-mediated phosphorylation. Phosphorylation of Thr-233 by CDK5 in response to MPP(+)/MPTP (1-methyl-4-phenylpyridinium) reduces AP-endodeoxyribonuclease activity resulting in accumulation of DNA damage and contributing to neuronal death. Post-translationally, acetylated on Lys-6 and Lys-7. Acetylation is increased by the transcriptional coactivator EP300 acetyltransferase, genotoxic agents like H(2)O(2) and methyl methanesulfonate (MMS). Acetylation increases its binding affinity to the negative calcium response element (nCaRE) DNA promoter. The acetylated form induces a stronger binding of YBX1 to the Y-box sequence in the MDR1 promoter than the unacetylated form. Deacetylated on lysines. Lys-6 and Lys-7 are deacetylated by SIRT1. Cleaved at Lys-31 by granzyme A to create the mitochondrial form; leading in reduction of binding to DNA, AP endodeoxyribonuclease activity, redox activation of transcription factors and to enhanced cell death. Cleaved by granzyme K; leading to intracellular ROS accumulation and enhanced cell death after oxidative stress. In terms of processing, cys-69 and Cys-93 are nitrosylated in response to nitric oxide (NO) and lead to the exposure of the nuclear export signal (NES). Post-translationally, ubiquitinated by MDM2; leading to translocation to the cytoplasm and proteasomal degradation.

The protein resides in the nucleus. The protein localises to the nucleolus. It is found in the nucleus speckle. Its subcellular location is the endoplasmic reticulum. It localises to the cytoplasm. The protein resides in the mitochondrion. It catalyses the reaction a deoxyribonucleotide-2'-deoxyribose-5'-monophosphate-DNA + H2O = a 5'-end 2'-deoxyribose-5'-monophosphate-DNA + a 3'-end 2'-deoxyribonucleotide-DNA + H(+). The enzyme catalyses Exonucleolytic cleavage in the 3'- to 5'-direction to yield nucleoside 5'-phosphates.. The catalysed reaction is a 3'-end 2'-deoxyribonucleotide-3'-phosphoglycolate-DNA + H2O = 2-phosphoglycolate + a 3'-end 2'-deoxyribonucleotide-DNA + H(+). It carries out the reaction a 3'-end 2'-deoxyribonucleotide-8-oxoguanine-DNA + H2O = 8-oxo-dGMP + a 3'-end 2'-deoxyribonucleotide-DNA + H(+). Its activity is regulated as follows. NPM1 stimulates endodeoxyribonuclease activity on double-stranded DNA with AP sites, but inhibits endoribonuclease activity on single-stranded RNA containing AP sites. In terms of biological role, multifunctional protein that plays a central role in the cellular response to oxidative stress. The two major activities of APEX1 are DNA repair and redox regulation of transcriptional factors. Functions as an apurinic/apyrimidinic (AP) endodeoxyribonuclease in the base excision repair (BER) pathway of DNA lesions induced by oxidative and alkylating agents. Initiates repair of AP sites in DNA by catalyzing hydrolytic incision of the phosphodiester backbone immediately adjacent to the damage, generating a single-strand break with 5'-deoxyribose phosphate and 3'-hydroxyl ends. Also incises at AP sites in the DNA strand of DNA/RNA hybrids, single-stranded DNA regions of R-loop structures, and single-stranded RNA molecules. Operates at switch sites of immunoglobulin (Ig) constant regions where it mediates Ig isotype class switch recombination. Processes AP sites induced by successive action of AICDA and UNG. Generates staggered nicks in opposite DNA strands resulting in the formation of double-strand DNA breaks that are finally resolved via non-homologous end joining repair pathway. Has 3'-5' exodeoxyribonuclease activity on mismatched deoxyribonucleotides at the 3' termini of nicked or gapped DNA molecules during short-patch BER. Possesses DNA 3' phosphodiesterase activity capable of removing lesions (such as phosphoglycolate and 8-oxoguanine) blocking the 3' side of DNA strand breaks. Also acts as an endoribonuclease involved in the control of single-stranded RNA metabolism. Plays a role in regulating MYC mRNA turnover by preferentially cleaving in between UA and CA dinucleotides of the MYC coding region determinant (CRD). In association with NMD1, plays a role in the rRNA quality control process during cell cycle progression. Acts as a loading factor for POLB onto non-incised AP sites in DNA and stimulates the 5'-terminal deoxyribose 5'-phosphate (dRp) excision activity of POLB. Exerts reversible nuclear redox activity to regulate DNA binding affinity and transcriptional activity of transcriptional factors by controlling the redox status of their DNA-binding domain, such as the FOS/JUN AP-1 complex after exposure to IR. Involved in calcium-dependent down-regulation of parathyroid hormone (PTH) expression by binding to negative calcium response elements (nCaREs). Together with HNRNPL or the dimer XRCC5/XRCC6, associates with nCaRE, acting as an activator of transcriptional repression. May also play a role in the epigenetic regulation of gene expression by participating in DNA demethylation. Stimulates the YBX1-mediated MDR1 promoter activity, when acetylated at Lys-6 and Lys-7, leading to drug resistance. Plays a role in protection from granzyme-mediated cellular repair leading to cell death. Binds DNA and RNA. Associates, together with YBX1, on the MDR1 promoter. Together with NPM1, associates with rRNA. The protein is DNA repair nuclease/redox regulator APEX1 (APEX1) of Pan paniscus (Pygmy chimpanzee).